The chain runs to 267 residues: Outer membrane protein assembly factor BamD (267 aa).

Residues 1-16 (MKKILLTVSLGLALSA) form the signal peptide. Cysteine 17 carries the N-palmitoyl cysteine lipid modification. Cysteine 17 carries S-diacylglycerol cysteine lipidation.

Belongs to the BamD family. As to quaternary structure, part of the Bam complex.

It localises to the cell outer membrane. Functionally, part of the outer membrane protein assembly complex, which is involved in assembly and insertion of beta-barrel proteins into the outer membrane. Required for efficient transformation of Neisseria meningitidis by species-related DNA. This is Outer membrane protein assembly factor BamD from Neisseria meningitidis serogroup B (strain ATCC BAA-335 / MC58).